Reading from the N-terminus, the 88-residue chain is Small ribosomal subunit protein bS20 (88 aa).

Positions 1–27 are disordered; that stretch reads MANSKSAKKRALQSEKRRQHNASRRSM.

The protein belongs to the bacterial ribosomal protein bS20 family.

Its function is as follows. Binds directly to 16S ribosomal RNA. This is Small ribosomal subunit protein bS20 from Shewanella frigidimarina (strain NCIMB 400).